The following is a 554-amino-acid chain: MSLATSSSMAGGAAVVPRSATATTASAFVTMKRRATAVRAVHAAEPSKNPPVGVPSAAKTSSPSVAAPEKAPVAAAPAPVAPAPAATKQVAPARWAVDSWRTKKALQLPEYPNAAELEAVLKTIEAFPPIVFAGEARHLEERLADAAMGRAFLLQGGDCAESFKEFNGNNIRDTFRVLLQMSAVLTFGGQMPVIKVGRMAGQFAKPRSEAFEERDGVKLPSYRGDNINGDAFNEKSRIPDPQRMVRAYAQSAATLNLLRAFATGGYAAMQRVTQWNLDFTQHSEQGDRYRELAHRVDEALGFMSAAGLTVDHPLMTSTDFWTSHECLLLPYEQSLTRQDSTTGHFYDCSAHMLWVGERTRQLDGAHVEFLRGVANPLGIKVSDKMNPTELVKLIEILNPSNKPGRITIITRMGAENMRVKLPHLIRAVRHAGQIVTWITDPMHGNTIKAPCGLKTRPFDSIAEVRAFFDVHDQEGSHPGGVHLEMTGQNVTECIGGSRTVTFDDLGDRYHTHCDPRLNASQSLELSFIIAERLRRKRIRSSKLNNMLPLPPFGV.

The N-terminal 39 residues, 1–39, are a transit peptide targeting the chloroplast; sequence MSLATSSSMAGGAAVVPRSATATTASAFVTMKRRATAVR. Residues 41–70 form a disordered region; that stretch reads VHAAEPSKNPPVGVPSAAKTSSPSVAAPEK.

This sequence belongs to the class-II DAHP synthase family.

It localises to the plastid. The protein resides in the chloroplast. The catalysed reaction is D-erythrose 4-phosphate + phosphoenolpyruvate + H2O = 7-phospho-2-dehydro-3-deoxy-D-arabino-heptonate + phosphate. It functions in the pathway metabolic intermediate biosynthesis; chorismate biosynthesis; chorismate from D-erythrose 4-phosphate and phosphoenolpyruvate: step 1/7. The chain is Phospho-2-dehydro-3-deoxyheptonate aldolase 1, chloroplastic (DAHPS1) from Oryza sativa subsp. japonica (Rice).